Consider the following 494-residue polypeptide: Ketol-acid reductoisomerase (NADP(+)) (494 aa).

One can recognise a KARI N-terminal Rossmann domain in the interval 14–208; sequence LDQLGRCRFM…GGHRAGCLES (195 aa). NADP(+) is bound by residues 45 to 48, Arg68, Arg76, Ser78, and 108 to 110; these read CGAQ and DKQ. The active site involves His132. An NADP(+)-binding site is contributed by Gly158. 2 KARI C-terminal knotted domains span residues 209-344 and 345-487; these read SFVA…NYPE and TDVE…MTDM. Mg(2+) is bound by residues Asp217, Glu221, Glu389, and Glu393. Ser414 is a substrate binding site.

The protein belongs to the ketol-acid reductoisomerase family. It depends on Mg(2+) as a cofactor.

The enzyme catalyses (2R)-2,3-dihydroxy-3-methylbutanoate + NADP(+) = (2S)-2-acetolactate + NADPH + H(+). The catalysed reaction is (2R,3R)-2,3-dihydroxy-3-methylpentanoate + NADP(+) = (S)-2-ethyl-2-hydroxy-3-oxobutanoate + NADPH + H(+). Its pathway is amino-acid biosynthesis; L-isoleucine biosynthesis; L-isoleucine from 2-oxobutanoate: step 2/4. It participates in amino-acid biosynthesis; L-valine biosynthesis; L-valine from pyruvate: step 2/4. Functionally, involved in the biosynthesis of branched-chain amino acids (BCAA). Catalyzes an alkyl-migration followed by a ketol-acid reduction of (S)-2-acetolactate (S2AL) to yield (R)-2,3-dihydroxy-isovalerate. In the isomerase reaction, S2AL is rearranged via a Mg-dependent methyl migration to produce 3-hydroxy-3-methyl-2-ketobutyrate (HMKB). In the reductase reaction, this 2-ketoacid undergoes a metal-dependent reduction by NADPH to yield (R)-2,3-dihydroxy-isovalerate. This chain is Ketol-acid reductoisomerase (NADP(+)), found in Vibrio parahaemolyticus serotype O3:K6 (strain RIMD 2210633).